We begin with the raw amino-acid sequence, 319 residues long: 4-hydroxy-3-methylbut-2-enyl diphosphate reductase (319 aa).

[4Fe-4S] cluster is bound at residue cysteine 18. The (2E)-4-hydroxy-3-methylbut-2-enyl diphosphate site is built by histidine 47 and histidine 81. Dimethylallyl diphosphate contacts are provided by histidine 47 and histidine 81. Residues histidine 47 and histidine 81 each contribute to the isopentenyl diphosphate site. Cysteine 103 lines the [4Fe-4S] cluster pocket. Histidine 131 serves as a coordination point for (2E)-4-hydroxy-3-methylbut-2-enyl diphosphate. Histidine 131 serves as a coordination point for dimethylallyl diphosphate. Position 131 (histidine 131) interacts with isopentenyl diphosphate. The active-site Proton donor is glutamate 133. Threonine 172 serves as a coordination point for (2E)-4-hydroxy-3-methylbut-2-enyl diphosphate. Residue cysteine 202 participates in [4Fe-4S] cluster binding. 4 residues coordinate (2E)-4-hydroxy-3-methylbut-2-enyl diphosphate: serine 230, serine 231, asparagine 232, and serine 275. Positions 230, 231, 232, and 275 each coordinate dimethylallyl diphosphate. Residues serine 230, serine 231, asparagine 232, and serine 275 each contribute to the isopentenyl diphosphate site.

This sequence belongs to the IspH family. [4Fe-4S] cluster is required as a cofactor.

It catalyses the reaction isopentenyl diphosphate + 2 oxidized [2Fe-2S]-[ferredoxin] + H2O = (2E)-4-hydroxy-3-methylbut-2-enyl diphosphate + 2 reduced [2Fe-2S]-[ferredoxin] + 2 H(+). The catalysed reaction is dimethylallyl diphosphate + 2 oxidized [2Fe-2S]-[ferredoxin] + H2O = (2E)-4-hydroxy-3-methylbut-2-enyl diphosphate + 2 reduced [2Fe-2S]-[ferredoxin] + 2 H(+). It functions in the pathway isoprenoid biosynthesis; dimethylallyl diphosphate biosynthesis; dimethylallyl diphosphate from (2E)-4-hydroxy-3-methylbutenyl diphosphate: step 1/1. Its pathway is isoprenoid biosynthesis; isopentenyl diphosphate biosynthesis via DXP pathway; isopentenyl diphosphate from 1-deoxy-D-xylulose 5-phosphate: step 6/6. In terms of biological role, catalyzes the conversion of 1-hydroxy-2-methyl-2-(E)-butenyl 4-diphosphate (HMBPP) into a mixture of isopentenyl diphosphate (IPP) and dimethylallyl diphosphate (DMAPP). Acts in the terminal step of the DOXP/MEP pathway for isoprenoid precursor biosynthesis. The protein is 4-hydroxy-3-methylbut-2-enyl diphosphate reductase of Beijerinckia indica subsp. indica (strain ATCC 9039 / DSM 1715 / NCIMB 8712).